The chain runs to 150 residues: MGLEKSLILFSLLVLVLGWVQPSLGRKPSVQDFKRQHMDPDSPPNSRPTYCNQMMKRRGMTKGSCKRVNTFVHESWATVKAICSQRQMTCKTSSRNNCHKSSSPLHITDCRLKGSSKYPNCDYTTTNSQKHIIIACEGNPLVPVHYDASV.

A signal peptide spans 1–25 (MGLEKSLILFSLLVLVLGWVQPSLG). Arg35 lines the substrate pocket. The active-site Proton acceptor is the His37. Disulfide bonds link Cys51/Cys110, Cys65/Cys121, Cys83/Cys136, and Cys90/Cys98. Residues 66-70 (KRVNT), Lys91, and Arg111 each bind substrate. Catalysis depends on His145, which acts as the Proton donor.

Belongs to the pancreatic ribonuclease family. Monomer.

It localises to the secreted. It carries out the reaction an [RNA] containing cytidine + H2O = an [RNA]-3'-cytidine-3'-phosphate + a 5'-hydroxy-ribonucleotide-3'-[RNA].. The enzyme catalyses an [RNA] containing uridine + H2O = an [RNA]-3'-uridine-3'-phosphate + a 5'-hydroxy-ribonucleotide-3'-[RNA].. In terms of biological role, endonuclease that catalyzes the cleavage of RNA on the 3' side of pyrimidine nucleotides. Acts on single-stranded and double-stranded RNA. The chain is Ribonuclease pancreatic delta-type from Rattus exulans (Polynesian rat).